The primary structure comprises 249 residues: Metallo-beta-lactamase type 2 (249 aa).

Positions 1–22 (MMKKMKWALVLALGLTGLNAFG) are cleaved as a signal peptide. Residues histidine 98, histidine 100, aspartate 102, histidine 161, and cysteine 180 each contribute to the Zn(2+) site. Residue lysine 183 participates in substrate binding. Histidine 222 provides a ligand contact to Zn(2+).

It belongs to the metallo-beta-lactamase superfamily. Class-B beta-lactamase family. In terms of assembly, monomer. Zn(2+) serves as cofactor.

It localises to the periplasm. The enzyme catalyses a beta-lactam + H2O = a substituted beta-amino acid. In terms of biological role, confers resistance to the different beta-lactams antibiotics (penicillin, cephalosporin and carbapenem) via the hydrolysis of the beta-lactam ring. This Elizabethkingia meningoseptica (Chryseobacterium meningosepticum) protein is Metallo-beta-lactamase type 2 (blaB4).